We begin with the raw amino-acid sequence, 171 residues long: Transcription factor pcr1 (171 aa).

One can recognise a bZIP domain in the interval 10 to 73 (DEKRRRILER…FRLKSQLLAH (64 aa)). The basic motif stretch occupies residues 12 to 51 (KRRRILERNRIAASKFRQKKKEWIKELEQTANAAFEQSKR). The leucine-zipper stretch occupies residues 52–66 (LQLLLSQLQQEAFRL). A disordered region spans residues 125–171 (QMHPSLQGLPPNQHPQMPPSSQQPNSDDVQQHMFSAAGLPRSLGGPI). Low complexity predominate over residues 143–152 (PSSQQPNSDD).

This sequence belongs to the bZIP family. As to quaternary structure, heterodimer of pcr1/mts2 and atf1/mts1.

Its subcellular location is the nucleus. Involved in regulation of gene expression for sexual development. Binds and activates CRE sites (cAMP-response elements, also known as M26 meiotic recombination hotspots). The protein is Transcription factor pcr1 (pcr1) of Schizosaccharomyces pombe (strain 972 / ATCC 24843) (Fission yeast).